We begin with the raw amino-acid sequence, 327 residues long: Malate dehydrogenase (327 aa).

12 to 18 (GAAGQIG) is an NAD(+) binding site. Positions 93 and 99 each coordinate substrate. Residues asparagine 106, glutamine 113, and 130–132 (VGN) contribute to the NAD(+) site. Asparagine 132 and arginine 163 together coordinate substrate. Histidine 188 functions as the Proton acceptor in the catalytic mechanism.

It belongs to the LDH/MDH superfamily. MDH type 2 family.

It catalyses the reaction (S)-malate + NAD(+) = oxaloacetate + NADH + H(+). In terms of biological role, catalyzes the reversible oxidation of malate to oxaloacetate. This is Malate dehydrogenase from Cupriavidus pinatubonensis (strain JMP 134 / LMG 1197) (Cupriavidus necator (strain JMP 134)).